The chain runs to 313 residues: 4-diphosphocytidyl-2-C-methyl-D-erythritol kinase (313 aa).

The active site involves lysine 29. 113 to 123 is an ATP binding site; that stretch reads PMGGGVGGGSS. Aspartate 155 is a catalytic residue.

The protein belongs to the GHMP kinase family. IspE subfamily.

The catalysed reaction is 4-CDP-2-C-methyl-D-erythritol + ATP = 4-CDP-2-C-methyl-D-erythritol 2-phosphate + ADP + H(+). The protein operates within isoprenoid biosynthesis; isopentenyl diphosphate biosynthesis via DXP pathway; isopentenyl diphosphate from 1-deoxy-D-xylulose 5-phosphate: step 3/6. In terms of biological role, catalyzes the phosphorylation of the position 2 hydroxy group of 4-diphosphocytidyl-2C-methyl-D-erythritol. In Haemophilus influenzae (strain ATCC 51907 / DSM 11121 / KW20 / Rd), this protein is 4-diphosphocytidyl-2-C-methyl-D-erythritol kinase.